The following is a 147-amino-acid chain: UPF0306 protein YPK_3704 (147 aa).

Belongs to the UPF0306 family.

The chain is UPF0306 protein YPK_3704 from Yersinia pseudotuberculosis serotype O:3 (strain YPIII).